Reading from the N-terminus, the 1065-residue chain is Carbamoyl phosphate synthase large chain (1065 aa).

Residues 1-401 (MPKRRDIETI…SLLKAVRSLE (401 aa)) form a carboxyphosphate synthetic domain region. ATP-binding residues include Arg129, Arg169, Gly175, Gly176, Arg208, Ile210, Glu215, Gly241, Ile242, His243, Gln284, and Glu298. The ATP-grasp 1 domain maps to 133–327 (RALMNELGEP…IAKLAAKIAV (195 aa)). Residues Gln284, Glu298, and Asn300 each coordinate Mg(2+). Mn(2+)-binding residues include Gln284, Glu298, and Asn300. Positions 402–546 (IGVHHLELNE…YSTYEEENES (145 aa)) are oligomerization domain. The segment at 547–929 (IVTEKPSVIV…ALYKGLVASG (383 aa)) is carbamoyl phosphate synthetic domain. In terms of domain architecture, ATP-grasp 2 spans 671-861 (EQALSELGIP…MANLATKAIL (191 aa)). ATP is bound by residues Arg707, Arg746, Ile748, Glu752, Gly777, Val778, His779, Ser780, Gln820, and Glu832. Residues Gln820, Glu832, and Asn834 each contribute to the Mg(2+) site. Gln820, Glu832, and Asn834 together coordinate Mn(2+). In terms of domain architecture, MGS-like spans 930 to 1065 (IHIQPHGAVL…TAMTEGLVRS (136 aa)). The allosteric domain stretch occupies residues 930–1065 (IHIQPHGAVL…TAMTEGLVRS (136 aa)).

This sequence belongs to the CarB family. As to quaternary structure, composed of two chains; the small (or glutamine) chain promotes the hydrolysis of glutamine to ammonia, which is used by the large (or ammonia) chain to synthesize carbamoyl phosphate. Tetramer of heterodimers (alpha,beta)4. Requires Mg(2+) as cofactor. Mn(2+) serves as cofactor.

It catalyses the reaction hydrogencarbonate + L-glutamine + 2 ATP + H2O = carbamoyl phosphate + L-glutamate + 2 ADP + phosphate + 2 H(+). It carries out the reaction hydrogencarbonate + NH4(+) + 2 ATP = carbamoyl phosphate + 2 ADP + phosphate + 2 H(+). It functions in the pathway amino-acid biosynthesis; L-arginine biosynthesis; carbamoyl phosphate from bicarbonate: step 1/1. It participates in pyrimidine metabolism; UMP biosynthesis via de novo pathway; (S)-dihydroorotate from bicarbonate: step 1/3. Functionally, large subunit of the glutamine-dependent carbamoyl phosphate synthetase (CPSase). CPSase catalyzes the formation of carbamoyl phosphate from the ammonia moiety of glutamine, carbonate, and phosphate donated by ATP, constituting the first step of 2 biosynthetic pathways, one leading to arginine and/or urea and the other to pyrimidine nucleotides. The large subunit (synthetase) binds the substrates ammonia (free or transferred from glutamine from the small subunit), hydrogencarbonate and ATP and carries out an ATP-coupled ligase reaction, activating hydrogencarbonate by forming carboxy phosphate which reacts with ammonia to form carbamoyl phosphate. The polypeptide is Carbamoyl phosphate synthase large chain (Bacillus caldolyticus).